The following is a 139-amino-acid chain: Ribosome-binding factor A (139 aa).

The protein belongs to the RbfA family. In terms of assembly, monomer. Binds 30S ribosomal subunits, but not 50S ribosomal subunits or 70S ribosomes.

The protein resides in the cytoplasm. In terms of biological role, one of several proteins that assist in the late maturation steps of the functional core of the 30S ribosomal subunit. Associates with free 30S ribosomal subunits (but not with 30S subunits that are part of 70S ribosomes or polysomes). Required for efficient processing of 16S rRNA. May interact with the 5'-terminal helix region of 16S rRNA. The chain is Ribosome-binding factor A from Methylobacterium sp. (strain 4-46).